The chain runs to 95 residues: Aspartyl/glutamyl-tRNA(Asn/Gln) amidotransferase subunit C (95 aa).

The protein belongs to the GatC family. In terms of assembly, heterotrimer of A, B and C subunits.

The enzyme catalyses L-glutamyl-tRNA(Gln) + L-glutamine + ATP + H2O = L-glutaminyl-tRNA(Gln) + L-glutamate + ADP + phosphate + H(+). It carries out the reaction L-aspartyl-tRNA(Asn) + L-glutamine + ATP + H2O = L-asparaginyl-tRNA(Asn) + L-glutamate + ADP + phosphate + 2 H(+). Allows the formation of correctly charged Asn-tRNA(Asn) or Gln-tRNA(Gln) through the transamidation of misacylated Asp-tRNA(Asn) or Glu-tRNA(Gln) in organisms which lack either or both of asparaginyl-tRNA or glutaminyl-tRNA synthetases. The reaction takes place in the presence of glutamine and ATP through an activated phospho-Asp-tRNA(Asn) or phospho-Glu-tRNA(Gln). In Pseudomonas paraeruginosa (strain DSM 24068 / PA7) (Pseudomonas aeruginosa (strain PA7)), this protein is Aspartyl/glutamyl-tRNA(Asn/Gln) amidotransferase subunit C.